Reading from the N-terminus, the 133-residue chain is Ribosome-binding factor A (133 aa).

Belongs to the RbfA family. Monomer. Binds 30S ribosomal subunits, but not 50S ribosomal subunits or 70S ribosomes.

Its subcellular location is the cytoplasm. Functionally, one of several proteins that assist in the late maturation steps of the functional core of the 30S ribosomal subunit. Associates with free 30S ribosomal subunits (but not with 30S subunits that are part of 70S ribosomes or polysomes). Required for efficient processing of 16S rRNA. May interact with the 5'-terminal helix region of 16S rRNA. The sequence is that of Ribosome-binding factor A from Acinetobacter baylyi (strain ATCC 33305 / BD413 / ADP1).